Here is a 365-residue protein sequence, read N- to C-terminus: Chorismate synthase (365 aa).

R47 provides a ligand contact to NADP(+). FMN contacts are provided by residues 124-126, G287, 302-306, and R328; these read RAS and KPTAT.

Belongs to the chorismate synthase family. In terms of assembly, homotetramer. It depends on FMNH2 as a cofactor.

The catalysed reaction is 5-O-(1-carboxyvinyl)-3-phosphoshikimate = chorismate + phosphate. It participates in metabolic intermediate biosynthesis; chorismate biosynthesis; chorismate from D-erythrose 4-phosphate and phosphoenolpyruvate: step 7/7. Its function is as follows. Catalyzes the anti-1,4-elimination of the C-3 phosphate and the C-6 proR hydrogen from 5-enolpyruvylshikimate-3-phosphate (EPSP) to yield chorismate, which is the branch point compound that serves as the starting substrate for the three terminal pathways of aromatic amino acid biosynthesis. This reaction introduces a second double bond into the aromatic ring system. The polypeptide is Chorismate synthase (Prochlorococcus marinus (strain AS9601)).